Here is a 151-residue protein sequence, read N- to C-terminus: Deoxyuridine 5'-triphosphate nucleotidohydrolase (151 aa).

Residues 70–72 (RSG), Asn-83, 87–89 (LID), and Met-97 contribute to the substrate site.

The protein belongs to the dUTPase family. Requires Mg(2+) as cofactor.

It catalyses the reaction dUTP + H2O = dUMP + diphosphate + H(+). It functions in the pathway pyrimidine metabolism; dUMP biosynthesis; dUMP from dCTP (dUTP route): step 2/2. Its function is as follows. This enzyme is involved in nucleotide metabolism: it produces dUMP, the immediate precursor of thymidine nucleotides and it decreases the intracellular concentration of dUTP so that uracil cannot be incorporated into DNA. This chain is Deoxyuridine 5'-triphosphate nucleotidohydrolase, found in Stutzerimonas stutzeri (strain A1501) (Pseudomonas stutzeri).